Consider the following 134-residue polypeptide: Small ribosomal subunit protein uS9 (134 aa).

Belongs to the universal ribosomal protein uS9 family.

This chain is Small ribosomal subunit protein uS9, found in Pseudothermotoga lettingae (strain ATCC BAA-301 / DSM 14385 / NBRC 107922 / TMO) (Thermotoga lettingae).